A 127-amino-acid chain; its full sequence is uncharacterized protein (127 aa).

2 helical membrane passes run 48 to 68 and 83 to 103; these read LYSLLFSKVSIISCAVLPLSI and VFLFLLSLHLLPYLASRCLID.

The protein localises to the membrane. This is an uncharacterized protein from Saccharomyces cerevisiae (strain ATCC 204508 / S288c) (Baker's yeast).